The sequence spans 299 residues: Tetrahydromethanopterin S-methyltransferase subunit E (299 aa).

A run of 6 helical transmembrane segments spans residues 57–79 (AISGEPVSYGLYVAVAGTIAWAL), 89–111 (AIIVGAGVAAIVHGAYSVSAFLG), 132–154 (HIGPIVGHGFIAVFTMTLAAYLA), 164–183 (LPLVSLIFGITVGAIGSSTG), 227–246 (FCSRFGGPLTGLCFGLIIFL), and 261–283 (LVTKTSIALLVGLLVVAVAAVIN).

The protein belongs to the MtrE family. As to quaternary structure, the complex is composed of 8 subunits; MtrA, MtrB, MtrC, MtrD, MtrE, MtrF, MtrG and MtrH.

Its subcellular location is the cell membrane. The enzyme catalyses 5-methyl-5,6,7,8-tetrahydromethanopterin + coenzyme M + 2 Na(+)(in) = 5,6,7,8-tetrahydromethanopterin + methyl-coenzyme M + 2 Na(+)(out). It functions in the pathway one-carbon metabolism; methanogenesis from CO(2); methyl-coenzyme M from 5,10-methylene-5,6,7,8-tetrahydromethanopterin: step 2/2. In terms of biological role, part of a complex that catalyzes the formation of methyl-coenzyme M and tetrahydromethanopterin from coenzyme M and methyl-tetrahydromethanopterin. This is an energy-conserving, sodium-ion translocating step. The polypeptide is Tetrahydromethanopterin S-methyltransferase subunit E (Methanococcus maripaludis (strain DSM 14266 / JCM 13030 / NBRC 101832 / S2 / LL)).